The following is a 199-amino-acid chain: Recombination protein RecR (199 aa).

Residues 58 to 73 (CSVCYNLSETELCRIC) form a C4-type zinc finger. One can recognise a Toprim domain in the interval 81-176 (TRLCVVEQPR…EITRLARGIT (96 aa)).

It belongs to the RecR family.

Functionally, may play a role in DNA repair. It seems to be involved in an RecBC-independent recombinational process of DNA repair. It may act with RecF and RecO. This Rhodopirellula baltica (strain DSM 10527 / NCIMB 13988 / SH1) protein is Recombination protein RecR.